The following is a 270-amino-acid chain: 3-phenylpropionate-dihydrodiol/cinnamic acid-dihydrodiol dehydrogenase (270 aa).

Phe10 to Ala34 is a binding site for NAD(+). Position 143 (Ser143) interacts with substrate. Residue Tyr156 is the Proton acceptor of the active site.

Belongs to the short-chain dehydrogenases/reductases (SDR) family.

The enzyme catalyses 3-(cis-5,6-dihydroxycyclohexa-1,3-dien-1-yl)propanoate + NAD(+) = 3-(2,3-dihydroxyphenyl)propanoate + NADH + H(+). The catalysed reaction is (2E)-3-(cis-5,6-dihydroxycyclohexa-1,3-dien-1-yl)prop-2-enoate + NAD(+) = (2E)-3-(2,3-dihydroxyphenyl)prop-2-enoate + NADH + H(+). It participates in aromatic compound metabolism; 3-phenylpropanoate degradation. Its function is as follows. Converts 3-phenylpropionate-dihydrodiol (PP-dihydrodiol) and cinnamic acid-dihydrodiol (CI-dihydrodiol) into 3-(2,3-dihydroxylphenyl)propanoic acid (DHPP) and 2,3-dihydroxicinnamic acid (DHCI), respectively. This chain is 3-phenylpropionate-dihydrodiol/cinnamic acid-dihydrodiol dehydrogenase, found in Escherichia coli O17:K52:H18 (strain UMN026 / ExPEC).